Reading from the N-terminus, the 493-residue chain is MTKAISMDALLSPWVDCPSLASVLVSELELDSRKVQPGTTFVALVGHVVDGRKFIASAIEKGANAVIAQACDVKAHGTIDIIDDIPVVYLDALDKCLSEIAGQLYTYPDMKLIGVTGTNGKTTITQLIAQWIGLVGSKAAVMGTTGNGFLDDLKEAANTTGNAVEIQHTLASLAEQQAQYTALEVSSHGLIQGRVKSLSFAAGVFTNLSRDHLDYHGTMEEYANAKLTLFTQHQCAQAIINVDDEVGAAWAKQLTNAIAVSLAPTTEFEHALWASQVAYAESGITIRFDGQFGEGTLHAPLIGEFNAANLMLAFATLLSLGFDKSDLLATAAQLQPVLGRMELFQAEHRAKVVVDYAHTPDALEKALQALRVHCDGQLWAIFGCGGDRDAGKRPMMAEIAERLGDKVVLTDDNPRSEDPVLIVKDMLAGLSKPAEAIVQHDRFKALFYALENAAPQDIILLAGKGHEDYQIRNGETIHYSDRESAMQLLGLSS.

2 residues coordinate UDP-N-acetyl-alpha-D-muramoyl-L-alanyl-D-glutamate: L30 and S32. 117–123 (GTNGKTT) is an ATP binding site. UDP-N-acetyl-alpha-D-muramoyl-L-alanyl-D-glutamate-binding positions include N158, 159–160 (TT), S186, Q192, and R194. K226 is modified (N6-carboxylysine). Residues R388, 412–415 (DNPR), G463, and E467 contribute to the meso-2,6-diaminopimelate site. A Meso-diaminopimelate recognition motif motif is present at residues 412–415 (DNPR).

Belongs to the MurCDEF family. MurE subfamily. Requires Mg(2+) as cofactor. Post-translationally, carboxylation is probably crucial for Mg(2+) binding and, consequently, for the gamma-phosphate positioning of ATP.

It localises to the cytoplasm. The catalysed reaction is UDP-N-acetyl-alpha-D-muramoyl-L-alanyl-D-glutamate + meso-2,6-diaminopimelate + ATP = UDP-N-acetyl-alpha-D-muramoyl-L-alanyl-gamma-D-glutamyl-meso-2,6-diaminopimelate + ADP + phosphate + H(+). The protein operates within cell wall biogenesis; peptidoglycan biosynthesis. Functionally, catalyzes the addition of meso-diaminopimelic acid to the nucleotide precursor UDP-N-acetylmuramoyl-L-alanyl-D-glutamate (UMAG) in the biosynthesis of bacterial cell-wall peptidoglycan. This is UDP-N-acetylmuramoyl-L-alanyl-D-glutamate--2,6-diaminopimelate ligase from Vibrio parahaemolyticus serotype O3:K6 (strain RIMD 2210633).